The chain runs to 297 residues: MLRIGSHVSMSGKHMLLAASQEAVSYGANTFMIYTGAPQNTRRKKIEDLNIEAGRAHMQENGIDEIIVHAPYIINIGNTTNPSTFELGVDFLRSEIERTAAIGAKQIVLHPGAHVGAGAEAGIKKIIEGLNEVIDPNQNVQIALETMAGKGSECGRSFEELAQIIEGVTHNEQLSVCFDTCHTHDAGYNIVEDFDGVLNEFDKIIGIDRIKVLHINDSKNVKGARKDRHENIGFGEIGFDALQYVVHHEQLKDIPKILETPYVGEDKKNKKPPYRFEIEMLKEKQFDDTLLEKILQQ.

H69, H110, E145, D179, H182, H214, D227, H229, and E259 together coordinate Zn(2+).

The protein belongs to the AP endonuclease 2 family. The cofactor is Zn(2+).

The catalysed reaction is Endonucleolytic cleavage to 5'-phosphooligonucleotide end-products.. Its function is as follows. Endonuclease IV plays a role in DNA repair. It cleaves phosphodiester bonds at apurinic or apyrimidinic (AP) sites, generating a 3'-hydroxyl group and a 5'-terminal sugar phosphate. The sequence is that of Probable endonuclease 4 from Bacillus subtilis (strain 168).